Reading from the N-terminus, the 388-residue chain is Probable Na(+)/H(+) antiporter 3 (388 aa).

Helical transmembrane passes span 2–22 (ESYY…PNLL), 27–47 (IPAI…GLNI), 53–73 (TLKI…GLEV), 81–101 (EFKN…VGGY), 102–122 (LIGQ…VIFA), 146–166 (IILS…SVVI), 175–195 (VGTF…AIPS), 215–235 (VLFI…HPIV), 263–283 (AIGY…ETNI), 294–314 (LLLI…FIAL), 325–345 (TIGG…ASIG), and 354–374 (EIFV…PIVV).

The protein belongs to the monovalent cation:proton antiporter 1 (CPA1) transporter (TC 2.A.36) family.

It localises to the cell membrane. Its function is as follows. This is probably a Na(+)/H(+) antiporter. This Methanocaldococcus jannaschii (strain ATCC 43067 / DSM 2661 / JAL-1 / JCM 10045 / NBRC 100440) (Methanococcus jannaschii) protein is Probable Na(+)/H(+) antiporter 3.